Here is a 948-residue protein sequence, read N- to C-terminus: Zinc finger CCCH domain-containing protein 3 (948 aa).

Disordered stretches follow at residues 25–108 (HGNA…VPQQ), 121–219 (QNVV…RRTV), 265–296 (VDAG…REAS), and 336–493 (NVCK…LKKT). The span at 56-74 (RPSRRGYSSHHGPSWRKKY) shows a compositional bias: basic residues. Residues 128 to 141 (KPPSKSGSASASGA) are compositionally biased toward low complexity. Residues 157-166 (QRPREGEGEP) are compositionally biased toward basic and acidic residues. The segment covering 372 to 398 (SAPSKYKWKASSPSASSSSSFRWQSEA) has biased composition (low complexity). The span at 405 to 415 (SQLSPVLSRSP) shows a compositional bias: polar residues. A Phosphoserine modification is found at S408. The segment covering 441 to 452 (VKSRTKIIRRRS) has biased composition (basic residues). C3H1-type zinc fingers lie at residues 667–695 (EKRK…HDPE), 699–722 (VCTR…HHVS), 723–749 (KEKM…HVYV), 750–777 (SRKA…HTLL), and 778–800 (CPDF…HRTQ). Disordered stretches follow at residues 798 to 891 (RTQK…HEAP) and 913 to 948 (ISLQ…KPRL). Residues 834–846 (SASQRPTRQTPSS) show a composition bias toward polar residues. 2 stretches are compositionally biased toward low complexity: residues 847 to 856 (AALTAAAVAA) and 864 to 885 (SASP…PPAS). 2 positions are modified to phosphoserine: S918 and S920.

As to quaternary structure, interacts with SMAD1, SMAD3, SMAD4, CPSF2 and CPSF3.

It localises to the nucleus. Functionally, required for the export of polyadenylated mRNAs from the nucleus. Enhances ACVR1B-induced SMAD-dependent transcription. Binds to single-stranded DNA but not to double-stranded DNA in vitro. Involved in RNA cleavage. This is Zinc finger CCCH domain-containing protein 3 (ZC3H3) from Homo sapiens (Human).